The chain runs to 202 residues: Ribosome maturation factor RimM (202 aa).

One can recognise a PRC barrel domain in the interval 121–202 (KDEYYWVDLI…CITVDWQPDY (82 aa)).

It belongs to the RimM family. As to quaternary structure, binds ribosomal protein uS19.

It is found in the cytoplasm. Its function is as follows. An accessory protein needed during the final step in the assembly of 30S ribosomal subunit, possibly for assembly of the head region. Essential for efficient processing of 16S rRNA. May be needed both before and after RbfA during the maturation of 16S rRNA. It has affinity for free ribosomal 30S subunits but not for 70S ribosomes. This Polaromonas sp. (strain JS666 / ATCC BAA-500) protein is Ribosome maturation factor RimM.